Reading from the N-terminus, the 807-residue chain is 85/88 kDa calcium-independent phospholipase A2 (807 aa).

Serine 13 carries the post-translational modification Phosphoserine. 9 ANK repeats span residues tryptophan 120 to threonine 147, glutamate 151 to valine 181, lysine 185 to glutamine 215, glutamine 219 to isoleucine 248, proline 251 to serine 281, tyrosine 286 to serine 312, serine 316 to alanine 345, histidine 349 to threonine 378, and phenylalanine 382 to leucine 403. 2 helical membrane-spanning segments follow: residues leucine 481 to isoleucine 501 and leucine 512 to serine 532. Residues leucine 482 to methionine 666 enclose the PNPLA domain. Positions glycine 486–glycine 491 match the GXGXXG motif. The GXSXG signature appears at glycine 518–glycine 522. Serine 520 (nucleophile) is an active-site residue. Aspartate 653 functions as the Proton acceptor in the catalytic mechanism. Residues aspartate 653–glycine 655 carry the DGA/G motif. The tract at residues arginine 678–lysine 687 is calmodulin-binding (1-9-14 motif). The interval alanine 749–arginine 760 is calmodulin-binding (IQ motif).

In terms of assembly, homodimer formed by catalytic domains tightly interacting through a large hydrophobic interface. The contact area involves 3 alpha helices, several loops and a part of the beta sheet from each monomer. Both active sites of the dimer are in close proximity adopting an open conformation that provide sufficient space for phospholipid access and favoring cooperativity in deacylation-reacylation reactions. Each monomer has 9 ankyrin repeats stacked side-by-side in an elongated structure oriented outwards from the catalytic core. In terms of tissue distribution, expressed in pancreatic beta-cells. Expressed in skeletal muscle (at protein level).

The protein resides in the cytoplasm. It localises to the cell membrane. Its subcellular location is the mitochondrion. The protein localises to the cell projection. It is found in the pseudopodium. The catalysed reaction is a 1,2-diacyl-sn-glycero-3-phosphocholine + H2O = a 1-acyl-sn-glycero-3-phosphocholine + a fatty acid + H(+). The enzyme catalyses a 1-O-alkyl-2-acyl-sn-glycero-3-phosphocholine + H2O = a 1-O-alkyl-sn-glycero-3-phosphocholine + a fatty acid + H(+). It catalyses the reaction 1,2-dihexadecanoyl-sn-glycero-3-phosphocholine + H2O = 1-hexadecanoyl-sn-glycero-3-phosphocholine + hexadecanoate + H(+). It carries out the reaction 1-hexadecanoyl-2-(9Z-octadecenoyl)-sn-glycero-3-phosphocholine + H2O = 1-hexadecanoyl-sn-glycero-3-phosphocholine + (9Z)-octadecenoate + H(+). The catalysed reaction is 1-hexadecanoyl-2-(9Z,12Z-octadecadienoyl)-sn-glycero-3-phosphocholine + H2O = (9Z,12Z)-octadecadienoate + 1-hexadecanoyl-sn-glycero-3-phosphocholine + H(+). The enzyme catalyses 1-hexadecanoyl-2-(5Z,8Z,11Z,14Z-eicosatetraenoyl)-sn-glycero-3-phosphocholine + H2O = 1-hexadecanoyl-sn-glycero-3-phosphocholine + (5Z,8Z,11Z,14Z)-eicosatetraenoate + H(+). It catalyses the reaction 1-octadecanoyl-2-(5Z,8Z,11Z,14Z-eicosatetraenoyl)-sn-glycero-3-phosphocholine + H2O = 1-octadecanoyl-sn-glycero-3-phosphocholine + (5Z,8Z,11Z,14Z)-eicosatetraenoate + H(+). It carries out the reaction 1-hexadecanoyl-2-(5Z,8Z,11Z,14Z-eicosatetraenoyl)-sn-glycero-3-phosphoethanolamine + H2O = 1-hexadecanoyl-sn-glycero-3-phosphoethanolamine + (5Z,8Z,11Z,14Z)-eicosatetraenoate + H(+). The catalysed reaction is 1,2-dihexadecanoyl-sn-glycero-3-phosphate + H2O = 1-hexadecanoyl-sn-glycero-3-phosphate + hexadecanoate + H(+). The enzyme catalyses a 1-acyl-sn-glycero-3-phosphocholine + H2O = sn-glycerol 3-phosphocholine + a fatty acid + H(+). It catalyses the reaction 1-hexadecanoyl-sn-glycero-3-phosphocholine + H2O = sn-glycerol 3-phosphocholine + hexadecanoate + H(+). It carries out the reaction 1-(5Z,8Z,11Z,14Z-eicosatetraenoyl)-sn-glycero-3-phosphocholine + H2O = sn-glycerol 3-phosphocholine + (5Z,8Z,11Z,14Z)-eicosatetraenoate + H(+). The catalysed reaction is 2-(5Z,8Z,11Z,14Z)-eicosatetraenoyl-sn-glycero-3-phosphocholine + H2O = sn-glycerol 3-phosphocholine + (5Z,8Z,11Z,14Z)-eicosatetraenoate + H(+). The enzyme catalyses 1-O-hexadecyl-2-(5Z,8Z,11Z,14Z)-eicosatetraenoyl-sn-glycero-3-phosphocholine + H2O = 1-O-hexadecyl-sn-glycero-3-phosphocholine + (5Z,8Z,11Z,14Z)-eicosatetraenoate + H(+). It catalyses the reaction 1-O-hexadecyl-2-acetyl-sn-glycero-3-phosphocholine + H2O = 1-O-hexadecyl-sn-glycero-3-phosphocholine + acetate + H(+). It carries out the reaction hexadecanoyl-CoA + H2O = hexadecanoate + CoA + H(+). The catalysed reaction is 1',3'-bis[1,2-di-(9Z-octadecenoyl)-sn-glycero-3-phospho]-glycerol + H2O = 1'-[1,2-di-(9Z-octadecenoyl)-sn-glycero-3-phospho]-3'-[1-(9Z-octadecenoyl)-sn-glycero-3-phospho]-glycerol + (9Z)-octadecenoate + H(+). The enzyme catalyses 1'-[1,2-di-(9Z-octadecenoyl)-sn-glycero-3-phospho]-3'-[1-(9Z-octadecenoyl)-sn-glycero-3-phospho]-glycerol + H2O = 1',3'-bis-[1-(9Z-octadecenoyl)-sn-glycero-3-phospho]-glycerol + (9Z)-octadecenoate + H(+). It catalyses the reaction 1',3'-bis-[1,2-di-(9Z,12Z-octadecadienoyl)-sn-glycero-3-phospho]-glycerol + H2O = 1'-[1,2-di-(9Z,12Z-octadecadienoyl)-sn-glycero-3-phospho]-3'-[1-(9Z,12Z-octadecadienoyl)-sn-glycero-3-phospho]-glycerol + (9Z,12Z)-octadecadienoate + H(+). It carries out the reaction 1-octadecanoyl-2-(15-hydroxy-(5Z,8Z,11Z,13E)-eicosatetraenoyl)-sn-glycero-3-phosphoethanolamine + H2O = 1-octadecanoyl-sn-glycero-3-phosphoethanolamine + 15-hydroxy-(5Z,8Z,11Z,13E)-eicosatetraenoate + H(+). Activated by ATP. Inhibited by calcium-activated calmodulin. Inhibited by bromoenol lactone (BEL). In terms of biological role, calcium-independent phospholipase involved in phospholipid remodeling with implications in cellular membrane homeostasis, mitochondrial integrity and signal transduction. Hydrolyzes the ester bond of the fatty acyl group attached at sn-1 or sn-2 position of phospholipids (phospholipase A1 and A2 activity respectively), producing lysophospholipids that are used in deacylation-reacylation cycles. Hydrolyzes both saturated and unsaturated long fatty acyl chains in various glycerophospholipid classes such as phosphatidylcholines, phosphatidylethanolamines and phosphatidates, with a preference for hydrolysis at sn-2 position. Can further hydrolyze lysophospholipids carrying saturated fatty acyl chains (lysophospholipase activity). Upon oxidative stress, contributes to remodeling of mitochondrial phospholipids in pancreatic beta cells, in a repair mechanism to reduce oxidized lipid content. Preferentially hydrolyzes oxidized polyunsaturated fatty acyl chains from cardiolipins, yielding monolysocardiolipins that can be reacylated with unoxidized fatty acyls to regenerate native cardiolipin species. Hydrolyzes oxidized glycerophosphoethanolamines present in pancreatic islets, releasing oxidized polyunsaturated fatty acids such as hydroxyeicosatetraenoates (HETEs). Has thioesterase activity toward fatty-acyl CoA releasing CoA-SH known to facilitate fatty acid transport and beta-oxidation in mitochondria particularly in skeletal muscle. Plays a role in regulation of membrane dynamics and homeostasis. Selectively hydrolyzes sn-2 arachidonoyl group in plasmalogen phospholipids, structural components of lipid rafts and myelin. Regulates F-actin polymerization at the pseudopods, which is required for both speed and directionality of MCP1/CCL2-induced monocyte chemotaxis. Targets membrane phospholipids to produce potent lipid signaling messengers. Generates lysophosphatidate (LPA, 1-acyl-glycerol-3-phosphate), which acts via G-protein receptors in various cell types. Has phospholipase A2 activity toward platelet-activating factor (PAF, 1-O-alkyl-2-acetyl-sn-glycero-3-phosphocholine), likely playing a role in inactivation of this potent pro-inflammatory signaling lipid. In response to glucose, amplifies calcium influx in pancreatic beta cells to promote INS secretion. The sequence is that of 85/88 kDa calcium-independent phospholipase A2 (Pla2g6) from Rattus norvegicus (Rat).